Here is a 302-residue protein sequence, read N- to C-terminus: Sulfate adenylyltransferase subunit 2 (302 aa).

Positions 280-302 are disordered; it reads RQGRLIDSDQSASMEQKKRQGYF.

The protein belongs to the PAPS reductase family. CysD subfamily. As to quaternary structure, heterodimer composed of CysD, the smaller subunit, and CysN.

It carries out the reaction sulfate + ATP + H(+) = adenosine 5'-phosphosulfate + diphosphate. It participates in sulfur metabolism; hydrogen sulfide biosynthesis; sulfite from sulfate: step 1/3. Its function is as follows. With CysN forms the ATP sulfurylase (ATPS) that catalyzes the adenylation of sulfate producing adenosine 5'-phosphosulfate (APS) and diphosphate, the first enzymatic step in sulfur assimilation pathway. APS synthesis involves the formation of a high-energy phosphoric-sulfuric acid anhydride bond driven by GTP hydrolysis by CysN coupled to ATP hydrolysis by CysD. This Shewanella oneidensis (strain ATCC 700550 / JCM 31522 / CIP 106686 / LMG 19005 / NCIMB 14063 / MR-1) protein is Sulfate adenylyltransferase subunit 2.